A 1331-amino-acid polypeptide reads, in one-letter code: Serine/threonine-protein kinase SSK22 (1331 aa).

The Protein kinase domain maps to 1034–1310 (WQKRSFIGGG…AVELLIDPWM (277 aa)). ATP is bound by residues 1040 to 1048 (IGGGTFGQV) and K1063. Catalysis depends on D1158, which acts as the Proton acceptor.

This sequence belongs to the protein kinase superfamily. STE Ser/Thr protein kinase family. MAP kinase kinase kinase subfamily. In terms of assembly, interacts with by SSK1.

The enzyme catalyses L-seryl-[protein] + ATP = O-phospho-L-seryl-[protein] + ADP + H(+). The catalysed reaction is L-threonyl-[protein] + ATP = O-phospho-L-threonyl-[protein] + ADP + H(+). In terms of biological role, kinase involved in a signal transduction pathway that is activated by changes in the osmolarity of the extracellular environment. Activates the PBS2 MAP kinase kinase by phosphorylation. This is Serine/threonine-protein kinase SSK22 (SSK22) from Saccharomyces cerevisiae (strain ATCC 204508 / S288c) (Baker's yeast).